The sequence spans 231 residues: Somatolactin-1 (231 aa).

An N-terminal signal peptide occupies residues 1–24 (MRMIRAIKQGQWAVLLWPYLLTAS). 3 disulfide bridges follow: Cys-29-Cys-39, Cys-89-Cys-205, and Cys-222-Cys-230. Asn-145 carries an N-linked (GlcNAc...) asparagine glycan.

It belongs to the somatotropin/prolactin family. In terms of tissue distribution, pituitary gland.

It localises to the secreted. This is Somatolactin-1 from Sparus aurata (Gilthead sea bream).